The sequence spans 458 residues: Phosphoglucosamine mutase (458 aa).

Serine 106 functions as the Phosphoserine intermediate in the catalytic mechanism. Mg(2+) contacts are provided by serine 106, aspartate 247, aspartate 249, and aspartate 251. Serine 106 carries the post-translational modification Phosphoserine.

This sequence belongs to the phosphohexose mutase family. Mg(2+) serves as cofactor. In terms of processing, activated by phosphorylation.

It carries out the reaction alpha-D-glucosamine 1-phosphate = D-glucosamine 6-phosphate. Functionally, catalyzes the conversion of glucosamine-6-phosphate to glucosamine-1-phosphate. This chain is Phosphoglucosamine mutase, found in Chlamydia trachomatis serovar L2 (strain ATCC VR-902B / DSM 19102 / 434/Bu).